Consider the following 251-residue polypeptide: Isoprenyl transferase (251 aa).

The active site involves Asp31. Asp31 contacts Mg(2+). Substrate contacts are provided by residues 32–35, Trp36, Arg44, His48, and 76–78; these read GNGR and STE. Residue Asn79 is the Proton acceptor of the active site. Substrate-binding positions include Trp80, Arg82, Arg199, and 205–207; that span reads RIS. Position 218 (Glu218) interacts with Mg(2+).

Belongs to the UPP synthase family. In terms of assembly, homodimer. Requires Mg(2+) as cofactor.

Functionally, catalyzes the condensation of isopentenyl diphosphate (IPP) with allylic pyrophosphates generating different type of terpenoids. The chain is Isoprenyl transferase from Thermosynechococcus vestitus (strain NIES-2133 / IAM M-273 / BP-1).